The chain runs to 40 residues: Neutral phospholipase A2 homolog cannitoxin beta chain 2 (40 aa).

In terms of assembly, heterotrimer of alpha, beta, and gamma chains; non-covalently linked. Expressed by the venom gland.

It localises to the secreted. Functionally, heterotrimer: Snake venom phospholipase A2 (PLA2) heterotrimer that acts as a potent presynaptic neurotoxin by blocking synaptic transmission and synaptic vesicle recycling. Enzymatic activity is essential for the neurotoxic effects. May act by binding in a calcium-dependent fashion to neurotonal pentraxin-1 (NPTX1) and neurotonal pentraxin-2 (NPTX2), but not to neuronal pentraxin receptor (NPTXR). Also binds to taipoxin-associated calcium binding protein 49 (RCN2), a protein localized in the lumen of endoplasmic reticulum. Monomer (beta chain): Snake venom phospholipase A2 homolog that is neither toxic nor enzymatically active. Does not bind calcium. The polypeptide is Neutral phospholipase A2 homolog cannitoxin beta chain 2 (Oxyuranus scutellatus canni (Papuan taipan)).